The following is a 714-amino-acid chain: Phosphoribosylformylglycinamidine synthase subunit PurL (714 aa).

Histidine 34 is a catalytic residue. Tyrosine 37 serves as a coordination point for ATP. Mg(2+) is bound at residue glutamate 78. Substrate is bound by residues serine 79–histidine 82 and arginine 101. Histidine 80 (proton acceptor) is an active-site residue. Position 102 (aspartate 102) interacts with Mg(2+). Glutamine 226 lines the substrate pocket. Aspartate 254 contacts Mg(2+). Glutamate 298–glutamine 300 contacts substrate. Residues aspartate 474 and glycine 511 each coordinate ATP. Asparagine 512 is a binding site for Mg(2+). Residue serine 514 participates in substrate binding.

The protein belongs to the FGAMS family. Monomer. Part of the FGAM synthase complex composed of 1 PurL, 1 PurQ and 2 PurS subunits.

The protein localises to the cytoplasm. It catalyses the reaction N(2)-formyl-N(1)-(5-phospho-beta-D-ribosyl)glycinamide + L-glutamine + ATP + H2O = 2-formamido-N(1)-(5-O-phospho-beta-D-ribosyl)acetamidine + L-glutamate + ADP + phosphate + H(+). Its pathway is purine metabolism; IMP biosynthesis via de novo pathway; 5-amino-1-(5-phospho-D-ribosyl)imidazole from N(2)-formyl-N(1)-(5-phospho-D-ribosyl)glycinamide: step 1/2. Its function is as follows. Part of the phosphoribosylformylglycinamidine synthase complex involved in the purines biosynthetic pathway. Catalyzes the ATP-dependent conversion of formylglycinamide ribonucleotide (FGAR) and glutamine to yield formylglycinamidine ribonucleotide (FGAM) and glutamate. The FGAM synthase complex is composed of three subunits. PurQ produces an ammonia molecule by converting glutamine to glutamate. PurL transfers the ammonia molecule to FGAR to form FGAM in an ATP-dependent manner. PurS interacts with PurQ and PurL and is thought to assist in the transfer of the ammonia molecule from PurQ to PurL. The sequence is that of Phosphoribosylformylglycinamidine synthase subunit PurL from Methanothermobacter thermautotrophicus (strain ATCC 29096 / DSM 1053 / JCM 10044 / NBRC 100330 / Delta H) (Methanobacterium thermoautotrophicum).